Here is a 122-residue protein sequence, read N- to C-terminus: Large ribosomal subunit protein uL14 (122 aa).

It belongs to the universal ribosomal protein uL14 family. As to quaternary structure, part of the 50S ribosomal subunit. Forms a cluster with proteins L3 and L19. In the 70S ribosome, L14 and L19 interact and together make contacts with the 16S rRNA in bridges B5 and B8.

In terms of biological role, binds to 23S rRNA. Forms part of two intersubunit bridges in the 70S ribosome. This Xanthomonas oryzae pv. oryzae (strain MAFF 311018) protein is Large ribosomal subunit protein uL14.